Consider the following 440-residue polypeptide: Thymidine phosphorylase (440 aa).

The protein belongs to the thymidine/pyrimidine-nucleoside phosphorylase family. Homodimer.

The catalysed reaction is thymidine + phosphate = 2-deoxy-alpha-D-ribose 1-phosphate + thymine. Its pathway is pyrimidine metabolism; dTMP biosynthesis via salvage pathway; dTMP from thymine: step 1/2. The enzymes which catalyze the reversible phosphorolysis of pyrimidine nucleosides are involved in the degradation of these compounds and in their utilization as carbon and energy sources, or in the rescue of pyrimidine bases for nucleotide synthesis. The sequence is that of Thymidine phosphorylase from Burkholderia pseudomallei (strain 1106a).